The sequence spans 336 residues: Ketol-acid reductoisomerase (NADP(+)) (336 aa).

Positions 1-181 (MNVYYDKDCN…GGGRTGIIET (181 aa)) constitute a KARI N-terminal Rossmann domain. Residues 24 to 27 (YGSQ), Arg47, Ser50, Ser52, and 82 to 85 (DEFQ) each bind NADP(+). Residue His107 is part of the active site. An NADP(+)-binding site is contributed by Gly133. The 146-residue stretch at 182–327 (TFQDETETDL…GKLRSMMPWI (146 aa)) folds into the KARI C-terminal knotted domain. Mg(2+) contacts are provided by Asp190, Glu194, Glu226, and Glu230. A substrate-binding site is contributed by Ser251.

Belongs to the ketol-acid reductoisomerase family. The cofactor is Mg(2+).

The catalysed reaction is (2R)-2,3-dihydroxy-3-methylbutanoate + NADP(+) = (2S)-2-acetolactate + NADPH + H(+). The enzyme catalyses (2R,3R)-2,3-dihydroxy-3-methylpentanoate + NADP(+) = (S)-2-ethyl-2-hydroxy-3-oxobutanoate + NADPH + H(+). It functions in the pathway amino-acid biosynthesis; L-isoleucine biosynthesis; L-isoleucine from 2-oxobutanoate: step 2/4. It participates in amino-acid biosynthesis; L-valine biosynthesis; L-valine from pyruvate: step 2/4. Functionally, involved in the biosynthesis of branched-chain amino acids (BCAA). Catalyzes an alkyl-migration followed by a ketol-acid reduction of (S)-2-acetolactate (S2AL) to yield (R)-2,3-dihydroxy-isovalerate. In the isomerase reaction, S2AL is rearranged via a Mg-dependent methyl migration to produce 3-hydroxy-3-methyl-2-ketobutyrate (HMKB). In the reductase reaction, this 2-ketoacid undergoes a metal-dependent reduction by NADPH to yield (R)-2,3-dihydroxy-isovalerate. The chain is Ketol-acid reductoisomerase (NADP(+)) from Geotalea daltonii (strain DSM 22248 / JCM 15807 / FRC-32) (Geobacter daltonii).